The following is an 804-amino-acid chain: DEP domain-containing protein 1A (804 aa).

A DEP domain is found at 24–108 (FRVGMPLRKH…DNNQLFRFPA (85 aa)). One can recognise a Rho-GAP domain in the interval 282–322 (DYFLNLPEPLLTFEYYELFVNILVVCGYITVSDRTSGIHKI). Serine 513 is modified (phosphoserine). The segment at 592–647 (AINALQLCCLLLPPPNRRKLQLLMRMISRMSQNVDMPKLHEQIGTRSLMINTFSRC) is interaction with ZNF224. The stretch at 726 to 760 (EQKISTSQAAIAELLENIVRSKSLSLKEKRRKLKQ) forms a coiled coil.

As to quaternary structure, can form dimers. Interacts with ZNF224.

It localises to the nucleus. Its function is as follows. May be involved in transcriptional regulation as a transcriptional corepressor. The DEPDC1A-ZNF224 complex may play a critical role in bladder carcinogenesis by repressing the transcription of the A20 gene, leading to transport of NF-KB protein into the nucleus, resulting in suppression of apoptosis of bladder cancer cells. This Mus musculus (Mouse) protein is DEP domain-containing protein 1A (Depdc1a).